A 109-amino-acid chain; its full sequence is Nucleoid-associated protein HS_1309 (109 aa).

This sequence belongs to the YbaB/EbfC family. As to quaternary structure, homodimer.

The protein localises to the cytoplasm. It localises to the nucleoid. Binds to DNA and alters its conformation. May be involved in regulation of gene expression, nucleoid organization and DNA protection. The sequence is that of Nucleoid-associated protein HS_1309 from Histophilus somni (strain 129Pt) (Haemophilus somnus).